The following is a 233-amino-acid chain: uncharacterized protein (233 aa).

Belongs to the asfivirus H233R family.

This is an uncharacterized protein from African swine fever virus (isolate Warthog/Namibia/Wart80/1980) (ASFV).